Consider the following 602-residue polypeptide: Aspartate--tRNA(Asp/Asn) ligase (602 aa).

Glu-176 provides a ligand contact to L-aspartate. The segment at 200-203 is aspartate; that stretch reads QQFK. The L-aspartate site is built by Arg-222 and His-452. An ATP-binding site is contributed by 222–224; that stretch reads RDE. Glu-490 contributes to the ATP binding site. Arg-497 serves as a coordination point for L-aspartate. 542–545 is an ATP binding site; that stretch reads GIDR.

It belongs to the class-II aminoacyl-tRNA synthetase family. Type 1 subfamily. Homodimer.

It is found in the cytoplasm. It catalyses the reaction tRNA(Asx) + L-aspartate + ATP = L-aspartyl-tRNA(Asx) + AMP + diphosphate. Functionally, aspartyl-tRNA synthetase with relaxed tRNA specificity since it is able to aspartylate not only its cognate tRNA(Asp) but also tRNA(Asn). Reaction proceeds in two steps: L-aspartate is first activated by ATP to form Asp-AMP and then transferred to the acceptor end of tRNA(Asp/Asn). This is Aspartate--tRNA(Asp/Asn) ligase from Rickettsia conorii (strain ATCC VR-613 / Malish 7).